Reading from the N-terminus, the 597-residue chain is DNA polymerase III subunit gamma/tau (597 aa).

Position 44–51 (G44–T51) interacts with ATP. Residues C63, C72, C75, and C78 each coordinate Zn(2+).

The protein belongs to the DnaX/STICHEL family. As to quaternary structure, DNA polymerase III contains a core (composed of alpha, epsilon and theta chains) that associates with a tau subunit. This core dimerizes to form the POLIII' complex. PolIII' associates with the gamma complex (composed of gamma, delta, delta', psi and chi chains) and with the beta chain to form the complete DNA polymerase III complex.

The enzyme catalyses DNA(n) + a 2'-deoxyribonucleoside 5'-triphosphate = DNA(n+1) + diphosphate. Functionally, DNA polymerase III is a complex, multichain enzyme responsible for most of the replicative synthesis in bacteria. This DNA polymerase also exhibits 3' to 5' exonuclease activity. The protein is DNA polymerase III subunit gamma/tau (dnaX) of Mycoplasma genitalium (strain ATCC 33530 / DSM 19775 / NCTC 10195 / G37) (Mycoplasmoides genitalium).